A 55-amino-acid polypeptide reads, in one-letter code: Ferredoxin (55 aa).

2 consecutive 4Fe-4S ferredoxin-type domains span residues 2–27 and 28–55; these read HIIT…HEGT and GKYE…VKAE. [4Fe-4S] cluster contacts are provided by Cys8, Cys11, Cys14, Cys18, Cys37, Cys40, Cys43, and Cys47.

The cofactor is [4Fe-4S] cluster.

Its function is as follows. Ferredoxins are iron-sulfur proteins that transfer electrons in a wide variety of metabolic reactions. The protein is Ferredoxin of Thermoanaerobacterium thermosaccharolyticum (Clostridium thermosaccharolyticum).